The primary structure comprises 1297 residues: Cingulin-like protein 1 (1297 aa).

The interval 1–550 (MELYFGEYQH…ELTQQTNEET (550 aa)) is head. The ZIM motif lies at 37 to 51 (AGSYGVSIRVQGIDG). S113, S203, and S257 each carry phosphoserine. Disordered regions lie at residues 161-208 (NEVN…TSED), 245-306 (GVGE…TPTS), 364-396 (KPGLQRRGRSGKRNRINPDDRKRSRSVDSAFPF), and 428-467 (QRSVAQEHRGKHSPSSPPAKLQGAQGAHPKPPLQNKDGKV). Positions 197 to 206 (YGSQPNSPTS) are enriched in polar residues. Residues 268 to 283 (ETKKNRPDVLPFRRQD) are compositionally biased toward basic and acidic residues. 3 positions are modified to phosphoserine: S284, S298, and S299. Over residues 297–306 (SSSSSTTPTS) the composition is skewed to low complexity. Residues 367-378 (LQRRGRSGKRNR) show a composition bias toward basic residues. Positions 379-389 (INPDDRKRSRS) are enriched in basic and acidic residues. Phosphoserine occurs at positions 389 and 392. S482 is modified (phosphoserine). The interval 586-608 (SRAAGSAQGSNQAPNSPSEGNSL) is disordered. Positions 592 to 608 (AQGSNQAPNSPSEGNSL) are enriched in polar residues. A coiled-coil region spans residues 604–1251 (EGNSLLDQKN…LQGQLNSLKK (648 aa)). A phosphoserine mark is found at S678 and S704. The interval 1259 to 1297 (SSKVLDDSDDDDLSSDAGSLYEAPLSYAFPKDSTIASQI) is tail.

The protein belongs to the cingulin family. As to quaternary structure, homodimer or oligomer. Interacts with CD2AP and SH3BP1; probably part of a complex at cell junctions. As to expression, widely expressed. Highly expressed in the kidney and lung.

The protein localises to the cell junction. It is found in the tight junction. In terms of biological role, may be involved in anchoring the apical junctional complex, especially tight junctions, to actin-based cytoskeletons. The protein is Cingulin-like protein 1 of Mus musculus (Mouse).